The sequence spans 316 residues: L-lactate dehydrogenase 3 (316 aa).

The NAD(+) site is built by valine 16, aspartate 37, arginine 42, and tyrosine 68. Arginine 91 is a substrate binding site. NAD(+)-binding positions include serine 104, 121 to 123 (ASN), and threonine 146. 123 to 126 (NPVD) contacts substrate. 151-154 (DSSR) contributes to the substrate binding site. Arginine 156 and histidine 171 together coordinate beta-D-fructose 1,6-bisphosphate. The active-site Proton acceptor is histidine 178. A substrate-binding site is contributed by threonine 233.

It belongs to the LDH/MDH superfamily. LDH family. Homotetramer.

It is found in the cytoplasm. It carries out the reaction (S)-lactate + NAD(+) = pyruvate + NADH + H(+). The protein operates within fermentation; pyruvate fermentation to lactate; (S)-lactate from pyruvate: step 1/1. Allosterically activated by fructose 1,6-bisphosphate (FBP). Its function is as follows. Catalyzes the conversion of lactate to pyruvate. The protein is L-lactate dehydrogenase 3 of Bacillus cereus (strain ATCC 14579 / DSM 31 / CCUG 7414 / JCM 2152 / NBRC 15305 / NCIMB 9373 / NCTC 2599 / NRRL B-3711).